The sequence spans 124 residues: Bactoprenol-linked glucose translocase (124 aa).

A run of 4 helical transmembrane segments spans residues 12-32, 45-65, 75-95, and 96-116; these read FFSYFLIGIVNTALHWGVFYA, NIVGFICAATFSFFANARCSF, FIFIFFMGAMSYLFGVLFDLL, and ALSPIFTLFTFSLFSLVLGYC.

This sequence belongs to the GtrA family.

It is found in the cell membrane. The protein operates within bacterial outer membrane biogenesis; lipopolysaccharide biosynthesis. Involved in O antigen modification. Involved in the translocation of bactoprenol-linked glucose across the cytoplasmic membrane. The polypeptide is Bactoprenol-linked glucose translocase (rfbI) (Shigella flexneri).